A 167-amino-acid chain; its full sequence is Large ribosomal subunit protein uL10 (167 aa).

This sequence belongs to the universal ribosomal protein uL10 family. Part of the ribosomal stalk of the 50S ribosomal subunit. The N-terminus interacts with L11 and the large rRNA to form the base of the stalk. The C-terminus forms an elongated spine to which L12 dimers bind in a sequential fashion forming a multimeric L10(L12)X complex.

Forms part of the ribosomal stalk, playing a central role in the interaction of the ribosome with GTP-bound translation factors. This Flavobacterium johnsoniae (strain ATCC 17061 / DSM 2064 / JCM 8514 / BCRC 14874 / CCUG 350202 / NBRC 14942 / NCIMB 11054 / UW101) (Cytophaga johnsonae) protein is Large ribosomal subunit protein uL10.